The following is a 393-amino-acid chain: Glutamate 5-kinase (393 aa).

Lysine 17 contributes to the ATP binding site. 3 residues coordinate substrate: serine 57, aspartate 144, and asparagine 156. Residue 176 to 177 (SD) participates in ATP binding. One can recognise a PUA domain in the interval 282–359 (AGSIAIDAGA…AEIAAILGYA (78 aa)). Positions 374-393 (APSGARSEEGGNEKKGKLHA) are disordered. The span at 379–393 (RSEEGGNEKKGKLHA) shows a compositional bias: basic and acidic residues.

This sequence belongs to the glutamate 5-kinase family.

The protein localises to the cytoplasm. It catalyses the reaction L-glutamate + ATP = L-glutamyl 5-phosphate + ADP. The protein operates within amino-acid biosynthesis; L-proline biosynthesis; L-glutamate 5-semialdehyde from L-glutamate: step 1/2. Functionally, catalyzes the transfer of a phosphate group to glutamate to form L-glutamate 5-phosphate. This is Glutamate 5-kinase from Sinorhizobium fredii (strain NBRC 101917 / NGR234).